The primary structure comprises 486 residues: ATP synthase subunit beta (486 aa).

164 to 171 (GGAGVGKT) lines the ATP pocket.

This sequence belongs to the ATPase alpha/beta chains family. As to quaternary structure, F-type ATPases have 2 components, CF(1) - the catalytic core - and CF(0) - the membrane proton channel. CF(1) has five subunits: alpha(3), beta(3), gamma(1), delta(1), epsilon(1). CF(0) has four main subunits: a(1), b(1), b'(1) and c(9-12).

The protein resides in the cellular thylakoid membrane. The catalysed reaction is ATP + H2O + 4 H(+)(in) = ADP + phosphate + 5 H(+)(out). Produces ATP from ADP in the presence of a proton gradient across the membrane. The catalytic sites are hosted primarily by the beta subunits. The sequence is that of ATP synthase subunit beta from Prochlorococcus marinus (strain AS9601).